Consider the following 106-residue polypeptide: Large ribosomal subunit protein uL30 (106 aa).

This sequence belongs to the universal ribosomal protein uL30 family. In terms of assembly, part of the 50S ribosomal subunit.

The polypeptide is Large ribosomal subunit protein uL30 (Ruthia magnifica subsp. Calyptogena magnifica).